Reading from the N-terminus, the 344-residue chain is Heat-inducible transcription repressor HrcA (344 aa).

Belongs to the HrcA family.

Its function is as follows. Negative regulator of class I heat shock genes (grpE-dnaK-dnaJ and groELS operons). Prevents heat-shock induction of these operons. This chain is Heat-inducible transcription repressor HrcA, found in Streptococcus agalactiae serotype Ia (strain ATCC 27591 / A909 / CDC SS700).